A 178-amino-acid chain; its full sequence is ATP synthase subunit delta (178 aa).

Belongs to the ATPase delta chain family. In terms of assembly, F-type ATPases have 2 components, F(1) - the catalytic core - and F(0) - the membrane proton channel. F(1) has five subunits: alpha(3), beta(3), gamma(1), delta(1), epsilon(1). F(0) has three main subunits: a(1), b(2) and c(10-14). The alpha and beta chains form an alternating ring which encloses part of the gamma chain. F(1) is attached to F(0) by a central stalk formed by the gamma and epsilon chains, while a peripheral stalk is formed by the delta and b chains.

The protein localises to the cell membrane. Its function is as follows. F(1)F(0) ATP synthase produces ATP from ADP in the presence of a proton or sodium gradient. F-type ATPases consist of two structural domains, F(1) containing the extramembraneous catalytic core and F(0) containing the membrane proton channel, linked together by a central stalk and a peripheral stalk. During catalysis, ATP synthesis in the catalytic domain of F(1) is coupled via a rotary mechanism of the central stalk subunits to proton translocation. Functionally, this protein is part of the stalk that links CF(0) to CF(1). It either transmits conformational changes from CF(0) to CF(1) or is implicated in proton conduction. This is ATP synthase subunit delta from Streptococcus pyogenes serotype M49 (strain NZ131).